The sequence spans 546 residues: Chaperonin GroEL 1 (546 aa).

Residues 30 to 33, lysine 51, 87 to 91, glycine 415, 479 to 481, and aspartate 495 contribute to the ATP site; these read TLGP, DGTTT, and NAA.

It belongs to the chaperonin (HSP60) family. Forms a cylinder of 14 subunits composed of two heptameric rings stacked back-to-back. Interacts with the co-chaperonin GroES.

Its subcellular location is the cytoplasm. The catalysed reaction is ATP + H2O + a folded polypeptide = ADP + phosphate + an unfolded polypeptide.. Together with its co-chaperonin GroES, plays an essential role in assisting protein folding. The GroEL-GroES system forms a nano-cage that allows encapsulation of the non-native substrate proteins and provides a physical environment optimized to promote and accelerate protein folding. This Paraburkholderia xenovorans (strain LB400) protein is Chaperonin GroEL 1.